Reading from the N-terminus, the 128-residue chain is Prefoldin subunit 1 (128 aa).

Coiled coils occupy residues 17–37 (MIEL…KEGD) and 81–115 (LKDS…LLQQ).

This sequence belongs to the prefoldin subunit beta family. As to quaternary structure, heterohexamer of two PFD-alpha type and four PFD-beta type subunits forming prefoldin co-chaperone complex. Interacts with LSM8, a specific subunit of the LSM2-8 complex, which is a core component of the spliceosome.

It localises to the cytoplasm. The protein resides in the nucleus. In terms of biological role, binds specifically to cytosolic chaperonin (c-CPN) and transfers target proteins to it. Binds to nascent polypeptide chain and promotes folding in an environment in which there are many competing pathways for nonnative proteins. Together with other chaperonins, contribute to the regulation of gene expression by modulating the spliceosome function on pre-mRNA splicing post-transcriptionally by acting as a co-chaperone of Hsp90 to control levels of LSM8. Required for microtubules (MTs) organization and dynamicity. Involved in the process leading to microtubules dissociation in response to gibberellic acid (GA) probably due to the DELLA proteins-mediated translocation of the prefoldin co-chaperone complex from the cytoplasm to the nucleus. This chain is Prefoldin subunit 1, found in Arabidopsis thaliana (Mouse-ear cress).